We begin with the raw amino-acid sequence, 247 residues long: Probable cyclic nucleotide phosphodiesterase XBJ1_0953 (247 aa).

The Fe cation site is built by aspartate 8, histidine 10, aspartate 52, asparagine 82, histidine 154, histidine 192, and histidine 194. Residues histidine 10, aspartate 52, and 82–83 (NH) contribute to the AMP site. Histidine 194 is an AMP binding site.

The protein belongs to the cyclic nucleotide phosphodiesterase class-III family. Fe(2+) serves as cofactor.

The sequence is that of Probable cyclic nucleotide phosphodiesterase XBJ1_0953 from Xenorhabdus bovienii (strain SS-2004) (Xenorhabdus nematophila subsp. bovienii).